We begin with the raw amino-acid sequence, 212 residues long: Phosphatidylserine decarboxylase proenzyme (212 aa).

Ser-182 (schiff-base intermediate with substrate; via pyruvic acid) is an active-site residue. Ser-182 bears the Pyruvic acid (Ser); by autocatalysis mark.

The protein belongs to the phosphatidylserine decarboxylase family. PSD-A subfamily. In terms of assembly, heterodimer of a large membrane-associated beta subunit and a small pyruvoyl-containing alpha subunit. It depends on pyruvate as a cofactor. Post-translationally, is synthesized initially as an inactive proenzyme. Formation of the active enzyme involves a self-maturation process in which the active site pyruvoyl group is generated from an internal serine residue via an autocatalytic post-translational modification. Two non-identical subunits are generated from the proenzyme in this reaction, and the pyruvate is formed at the N-terminus of the alpha chain, which is derived from the carboxyl end of the proenzyme. The post-translation cleavage follows an unusual pathway, termed non-hydrolytic serinolysis, in which the side chain hydroxyl group of the serine supplies its oxygen atom to form the C-terminus of the beta chain, while the remainder of the serine residue undergoes an oxidative deamination to produce ammonia and the pyruvoyl prosthetic group on the alpha chain.

The protein resides in the cell membrane. It catalyses the reaction a 1,2-diacyl-sn-glycero-3-phospho-L-serine + H(+) = a 1,2-diacyl-sn-glycero-3-phosphoethanolamine + CO2. The protein operates within phospholipid metabolism; phosphatidylethanolamine biosynthesis; phosphatidylethanolamine from CDP-diacylglycerol: step 2/2. In terms of biological role, catalyzes the formation of phosphatidylethanolamine (PtdEtn) from phosphatidylserine (PtdSer). This Chlorobium chlorochromatii (strain CaD3) protein is Phosphatidylserine decarboxylase proenzyme.